Consider the following 90-residue polypeptide: Small ribosomal subunit protein bS18 (90 aa).

It belongs to the bacterial ribosomal protein bS18 family. As to quaternary structure, part of the 30S ribosomal subunit. Forms a tight heterodimer with protein bS6.

In terms of biological role, binds as a heterodimer with protein bS6 to the central domain of the 16S rRNA, where it helps stabilize the platform of the 30S subunit. This chain is Small ribosomal subunit protein bS18, found in Porphyromonas gingivalis (strain ATCC 33277 / DSM 20709 / CIP 103683 / JCM 12257 / NCTC 11834 / 2561).